The chain runs to 467 residues: Regulatory protein NPR6 (467 aa).

Positions 27–111 (SDVTFSVEGR…LYSGQVSIVP (85 aa)) constitute a BTB domain. The segment at 117–131 (RSNCGDRGCWHTHCT) adopts a C2HC NPR-type zinc-finger fold. Residues Cys-120, Cys-125, His-127, and Cys-130 each contribute to the Zn(2+) site. ANK repeat units lie at residues 247-276 (QKIRRMRRALDSSDVELVKLMVMGEGLNLD), 277-306 (ESLALIYAVENCSREVVKALLELGAADVNY), 311-340 (TGKTALHIAAEMVSPDMVAVLLDHHADPNV), and 344-378 (DGITPLDILRTLTSDFLFKGAIPGLTHIEPNKLRL). Residues 434–467 (RDIGDDNSNQREGMNLHHHHHDPSTMYHHHHHHF) form a disordered region. Residues 449–467 (LHHHHHDPSTMYHHHHHHF) show a composition bias toward basic residues.

This sequence belongs to the plant 'ANKYRIN-BTB/POZ' family. 'NOOT-BOP-COCH-like' (NBCL) subfamily. In terms of assembly, homodimer or heterodimer with BOP2. Interacts with PAN.

The protein localises to the cytoplasm. It is found in the nucleus. It functions in the pathway protein modification; protein ubiquitination. May act as a substrate-specific adapter of an E3 ubiquitin-protein ligase complex (CUL3-RBX1-BTB) which mediates the ubiquitination and subsequent proteasomal degradation of target proteins. Acts redundantly with BOP2. BOP1/2 promote leaf and floral meristem fate and determinacy in a pathway targeting AP1 and AGL24. BOP1/2 act as transcriptional co-regulators through direct interaction with TGA factors, including PAN, a direct regulator of AP1. Controls lateral organ fate through positive regulation of adaxial-abaxial polarity genes ATHB-14/PHB, YAB1/FIL and YAB3, and through positive regulation of LOB domain-containing genes LOB, LBD6/AS2 and LBD36. Promotes and maintains a developmentally determinate state in leaf cells through the negative regulation of JAG, JGL and class I KNOX genes. Is also involved in nectary development, formation of normal abscission zones (AZs) and suppression of bract formation, probably by regulating the cell wall disorganization. The chain is Regulatory protein NPR6 from Arabidopsis thaliana (Mouse-ear cress).